Consider the following 259-residue polypeptide: Acyl-[acyl-carrier-protein]--UDP-N-acetylglucosamine O-acyltransferase (259 aa).

This sequence belongs to the transferase hexapeptide repeat family. LpxA subfamily. Homotrimer.

The protein resides in the cytoplasm. It catalyses the reaction a (3R)-hydroxyacyl-[ACP] + UDP-N-acetyl-alpha-D-glucosamine = a UDP-3-O-[(3R)-3-hydroxyacyl]-N-acetyl-alpha-D-glucosamine + holo-[ACP]. The protein operates within glycolipid biosynthesis; lipid IV(A) biosynthesis; lipid IV(A) from (3R)-3-hydroxytetradecanoyl-[acyl-carrier-protein] and UDP-N-acetyl-alpha-D-glucosamine: step 1/6. Involved in the biosynthesis of lipid A, a phosphorylated glycolipid that anchors the lipopolysaccharide to the outer membrane of the cell. The polypeptide is Acyl-[acyl-carrier-protein]--UDP-N-acetylglucosamine O-acyltransferase (Nautilia profundicola (strain ATCC BAA-1463 / DSM 18972 / AmH)).